The following is a 449-amino-acid chain: Glucose-6-phosphate isomerase (449 aa).

E291 serves as the catalytic Proton donor. Residues H312 and K426 contribute to the active site.

Belongs to the GPI family.

The protein localises to the cytoplasm. It catalyses the reaction alpha-D-glucose 6-phosphate = beta-D-fructose 6-phosphate. Its pathway is carbohydrate biosynthesis; gluconeogenesis. It functions in the pathway carbohydrate degradation; glycolysis; D-glyceraldehyde 3-phosphate and glycerone phosphate from D-glucose: step 2/4. Its function is as follows. Catalyzes the reversible isomerization of glucose-6-phosphate to fructose-6-phosphate. The chain is Glucose-6-phosphate isomerase from Streptococcus mutans serotype c (strain ATCC 700610 / UA159).